Reading from the N-terminus, the 97-residue chain is MAQGAGKSIKAKGKSGGSQRKNTGKTKPGKREVAPKDRQRVLERSQKKQLSSKINNSIEKQMVQAASVGKLSIMRNVGELESGEGKDGKAKGKGKSR.

2 disordered regions span residues 1–57 and 75–97; these read MAQG…INNS and RNVG…GKSR. Residues 29–46 show a composition bias toward basic and acidic residues; it reads GKREVAPKDRQRVLERSQ. Residues 48-57 show a composition bias toward polar residues; that stretch reads KQLSSKINNS.

It belongs to the UPF0390 family.

The chain is UPF0390 protein CNBD1430 from Cryptococcus neoformans var. neoformans serotype D (strain B-3501A) (Filobasidiella neoformans).